Consider the following 239-residue polypeptide: MLRYIFFAAILFFVFPNTESAGFLKFELTADRDCLLHLEHSSTYSETVRLLAYESRPLEIYTQGSINEIPVHFQLLHHFSGKALSEAKFQIFQLKNNGLWDSKVIDTDKVILSVRSTFYCENGYFGPICDRRSRTFAPKSDIQTSTPGYQTQVLKFDFKISDDIIIYSSLAFFVLLLIIFNCILCCYRPKKSQKYLDVSLGSPKVFSICGYSADKSGNTTEYLDAPSRFFSSTKIECVV.

Expressed in mesendodermal precursor cells of embryos.

May have a role in mesendoderm development during embryogenesis. The protein is Skn-1 dependent zygotic transcript 1 protein (sdz-1) of Caenorhabditis elegans.